The sequence spans 271 residues: ATP synthase subunit a (271 aa).

Helical transmembrane passes span 38–58 (FWTL…LFLL), 100–120 (LIAP…LMDL), 146–166 (DVNI…FYSI), 220–240 (LIFI…LNVP), and 242–262 (AIFH…LTIV).

The protein belongs to the ATPase A chain family. As to quaternary structure, F-type ATPases have 2 components, CF(1) - the catalytic core - and CF(0) - the membrane proton channel. CF(1) has five subunits: alpha(3), beta(3), gamma(1), delta(1), epsilon(1). CF(0) has three main subunits: a(1), b(2) and c(9-12). The alpha and beta chains form an alternating ring which encloses part of the gamma chain. CF(1) is attached to CF(0) by a central stalk formed by the gamma and epsilon chains, while a peripheral stalk is formed by the delta and b chains.

The protein localises to the cell inner membrane. In terms of biological role, key component of the proton channel; it plays a direct role in the translocation of protons across the membrane. The protein is ATP synthase subunit a of Citrobacter koseri (strain ATCC BAA-895 / CDC 4225-83 / SGSC4696).